The primary structure comprises 750 residues: Photosystem I P700 chlorophyll a apoprotein A1 (750 aa).

A run of 8 helical transmembrane segments spans residues 70 to 93 (VFSAHFGQLSIIFLWLSGMYFHGA), 156 to 179 (LYCTAIGALIFAALMLFAGWFHYH), 195 to 219 (LNHHLAGLLGLGSLSWAGHQIHVSL), 291 to 309 (IAHHHLAIAILFLIAGHMY), 346 to 369 (WHAQLSLNLAMLGSTTIVVAHHMY), 385 to 411 (LSLFTHHMWIGGFLIVGAAAHAAIFMV), 433 to 455 (AIISHLNWVCIFLGFHSFGLYIH), and 531 to 549 (FLVHHIHAFTIHVTVLILL). Positions 573 and 582 each coordinate [4Fe-4S] cluster. 2 helical membrane-spanning segments follow: residues 589–610 (HVFLGLFWMYNAISVVIFHFSW) and 664–686 (LSAYGLFFLGAHFVWAFSLMFLF). H675 contributes to the chlorophyll a' binding site. Chlorophyll a is bound by residues M683 and Y691. W692 contacts phylloquinone. The helical transmembrane segment at 724–744 (AVGVTHYLLGGIATTWAFFLA) threads the bilayer.

Belongs to the PsaA/PsaB family. As to quaternary structure, the PsaA/B heterodimer binds the P700 chlorophyll special pair and subsequent electron acceptors. PSI consists of a core antenna complex that captures photons, and an electron transfer chain that converts photonic excitation into a charge separation. The eukaryotic PSI reaction center is composed of at least 11 subunits. Requires P700 is a chlorophyll a/chlorophyll a' dimer, A0 is one or more chlorophyll a, A1 is one or both phylloquinones and FX is a shared 4Fe-4S iron-sulfur center. as cofactor.

The protein localises to the plastid. Its subcellular location is the chloroplast thylakoid membrane. It carries out the reaction reduced [plastocyanin] + hnu + oxidized [2Fe-2S]-[ferredoxin] = oxidized [plastocyanin] + reduced [2Fe-2S]-[ferredoxin]. Functionally, psaA and PsaB bind P700, the primary electron donor of photosystem I (PSI), as well as the electron acceptors A0, A1 and FX. PSI is a plastocyanin-ferredoxin oxidoreductase, converting photonic excitation into a charge separation, which transfers an electron from the donor P700 chlorophyll pair to the spectroscopically characterized acceptors A0, A1, FX, FA and FB in turn. Oxidized P700 is reduced on the lumenal side of the thylakoid membrane by plastocyanin. This is Photosystem I P700 chlorophyll a apoprotein A1 from Agrostis stolonifera (Creeping bentgrass).